The primary structure comprises 47 residues: Photosystem II reaction center protein K (47 aa).

Residues 1-10 (MNIGFDMILA) constitute a propeptide that is removed on maturation. Residues 22–42 (LVDVLPVIPLLFLLLAFVWQA) traverse the membrane as a helical segment.

It belongs to the PsbK family. As to quaternary structure, PSII is composed of 1 copy each of membrane proteins PsbA, PsbB, PsbC, PsbD, PsbE, PsbF, PsbH, PsbI, PsbJ, PsbK, PsbL, PsbM, PsbT, PsbX, PsbY, PsbZ, Psb30/Ycf12, at least 3 peripheral proteins of the oxygen-evolving complex and a large number of cofactors. It forms dimeric complexes.

The protein resides in the plastid. Its subcellular location is the chloroplast thylakoid membrane. Its function is as follows. One of the components of the core complex of photosystem II (PSII). PSII is a light-driven water:plastoquinone oxidoreductase that uses light energy to abstract electrons from H(2)O, generating O(2) and a proton gradient subsequently used for ATP formation. It consists of a core antenna complex that captures photons, and an electron transfer chain that converts photonic excitation into a charge separation. The sequence is that of Photosystem II reaction center protein K from Mesostigma viride (Green alga).